Here is a 77-residue protein sequence, read N- to C-terminus: Acyl carrier protein (77 aa).

A Carrier domain is found at 2-77 (SDIADRVKKI…DAVKFIQGAV (76 aa)). An O-(pantetheine 4'-phosphoryl)serine modification is found at Ser-37.

It belongs to the acyl carrier protein (ACP) family. In terms of processing, 4'-phosphopantetheine is transferred from CoA to a specific serine of apo-ACP by AcpS. This modification is essential for activity because fatty acids are bound in thioester linkage to the sulfhydryl of the prosthetic group.

Its subcellular location is the cytoplasm. It functions in the pathway lipid metabolism; fatty acid biosynthesis. Its function is as follows. Carrier of the growing fatty acid chain in fatty acid biosynthesis. This is Acyl carrier protein from Paracoccus denitrificans (strain Pd 1222).